Reading from the N-terminus, the 589-residue chain is Arginine--tRNA ligase (589 aa).

Positions 132-142 match the 'HIGH' region motif; it reads PNTNKPLHVGH.

It belongs to the class-I aminoacyl-tRNA synthetase family. In terms of assembly, monomer.

The protein localises to the cytoplasm. The enzyme catalyses tRNA(Arg) + L-arginine + ATP = L-arginyl-tRNA(Arg) + AMP + diphosphate. The protein is Arginine--tRNA ligase of Treponema pallidum subsp. pallidum (strain SS14).